The sequence spans 619 residues: Dihydroxy-acid dehydratase (619 aa).

Residue D81 participates in Mg(2+) binding. Position 122 (C122) interacts with [2Fe-2S] cluster. D123 and K124 together coordinate Mg(2+). N6-carboxylysine is present on K124. Position 198 (C198) interacts with [2Fe-2S] cluster. E494 contacts Mg(2+). S520 acts as the Proton acceptor in catalysis.

Belongs to the IlvD/Edd family. In terms of assembly, homodimer. The cofactor is [2Fe-2S] cluster. Requires Mg(2+) as cofactor.

The catalysed reaction is (2R)-2,3-dihydroxy-3-methylbutanoate = 3-methyl-2-oxobutanoate + H2O. It catalyses the reaction (2R,3R)-2,3-dihydroxy-3-methylpentanoate = (S)-3-methyl-2-oxopentanoate + H2O. The protein operates within amino-acid biosynthesis; L-isoleucine biosynthesis; L-isoleucine from 2-oxobutanoate: step 3/4. Its pathway is amino-acid biosynthesis; L-valine biosynthesis; L-valine from pyruvate: step 3/4. Functionally, functions in the biosynthesis of branched-chain amino acids. Catalyzes the dehydration of (2R,3R)-2,3-dihydroxy-3-methylpentanoate (2,3-dihydroxy-3-methylvalerate) into 2-oxo-3-methylpentanoate (2-oxo-3-methylvalerate) and of (2R)-2,3-dihydroxy-3-methylbutanoate (2,3-dihydroxyisovalerate) into 2-oxo-3-methylbutanoate (2-oxoisovalerate), the penultimate precursor to L-isoleucine and L-valine, respectively. This Neisseria meningitidis serogroup C / serotype 2a (strain ATCC 700532 / DSM 15464 / FAM18) protein is Dihydroxy-acid dehydratase.